A 131-amino-acid chain; its full sequence is Protein Turandot M (131 aa).

A signal peptide spans M1 to A23.

This sequence belongs to the Turandot family.

The protein resides in the secreted. A humoral factor that may play a role in stress tolerance. Requires Mekk1 expression in the fat body to regulate response to septic injury and consequent immune response. The chain is Protein Turandot M from Drosophila yakuba (Fruit fly).